The sequence spans 372 residues: DNA replication and repair protein RecF (372 aa).

30 to 37 serves as a coordination point for ATP; sequence GENGQGKT.

The protein belongs to the RecF family.

It localises to the cytoplasm. In terms of biological role, the RecF protein is involved in DNA metabolism; it is required for DNA replication and normal SOS inducibility. RecF binds preferentially to single-stranded, linear DNA. It also seems to bind ATP. This chain is DNA replication and repair protein RecF, found in Anaeromyxobacter dehalogenans (strain 2CP-C).